Reading from the N-terminus, the 600-residue chain is MRVSRLMLVTLRDAPADAEIISHQLLIRGGFIKRITSGIYAYLPLMWRVIQKINCIIREELNAKGCLEALLPQLHPSDLWKKTGRWEGYTAGEGIMFNLKDRQGRELGLGPTHEEIITQIAGESLHSYKQLPVNLYQIQTKFRDEIRPRFGLMRSREFIMKDAYSFHANEEDLKTSYASMDDAYRKIFERCGIKTVAVEADSGAIGGAASQEFMVTADAGEDLILISKDGKYAANQEKAISIPKAAIPLEKNAPILIETKNQNSINELCLNQNFQADQIIKVIVMLAILENGREQPVLISIRGDQELNETKLSNEISKFLNKNLIALKSITEDDLDRQGLINIPFGSIGPDLEDVMLSNASSWNKKFVRFADKTAAELELFVCGANKTEQHRAFSSWSDVGGLPKVVDIRKAKPGDQCFYDNKQFLIEKRGIEVGHIFQLGRKYSSSLEANFTNEKGSSEPFWMGCYGIGVSRIAQAAVEQSHDQSGIIWPLSISPFEVIIVIANIKDEVQNRLGEDIYKQLRHKGIDVLLDDRDERAGVKFKDADLIGIPWRVVVGRDSSSGKVELLKRSDRSVKLIESEIVVKELIAEISRKKSSISY.

This sequence belongs to the class-II aminoacyl-tRNA synthetase family. ProS type 1 subfamily. In terms of assembly, homodimer.

It localises to the cytoplasm. The enzyme catalyses tRNA(Pro) + L-proline + ATP = L-prolyl-tRNA(Pro) + AMP + diphosphate. Catalyzes the attachment of proline to tRNA(Pro) in a two-step reaction: proline is first activated by ATP to form Pro-AMP and then transferred to the acceptor end of tRNA(Pro). As ProRS can inadvertently accommodate and process non-cognate amino acids such as alanine and cysteine, to avoid such errors it has two additional distinct editing activities against alanine. One activity is designated as 'pretransfer' editing and involves the tRNA(Pro)-independent hydrolysis of activated Ala-AMP. The other activity is designated 'posttransfer' editing and involves deacylation of mischarged Ala-tRNA(Pro). The misacylated Cys-tRNA(Pro) is not edited by ProRS. This is Proline--tRNA ligase from Prochlorococcus marinus (strain MIT 9211).